We begin with the raw amino-acid sequence, 222 residues long: Charged multivesicular body protein 4b (222 aa).

2 disordered regions span residues 1 to 21 and 177 to 222; these read MSLI…PSPQ and NLLE…WATA. Residues 21-182 are a coiled coil; the sequence is QEAIQKLRDT…ELDKNLLEVQ (162 aa).

This sequence belongs to the SNF7 family. Probable core component of the endosomal sorting required for transport complex III (ESCRT-III). ESCRT-III components are thought to multimerize to form a flat lattice on the perimeter membrane of the endosome.

It localises to the cytoplasm. The protein resides in the cytosol. The protein localises to the late endosome membrane. Its subcellular location is the midbody. In terms of biological role, probable core component of the endosomal sorting required for transport complex III (ESCRT-III) which is involved in multivesicular bodies (MVBs) formation and sorting of endosomal cargo proteins into MVBs. MVBs contain intraluminal vesicles (ILVs) that are generated by invagination and scission from the limiting membrane of the endosome and mostly are delivered to lysosomes enabling degradation of membrane proteins, such as stimulated growth factor receptors, lysosomal enzymes and lipids. This is Charged multivesicular body protein 4b (chmp4b) from Xenopus laevis (African clawed frog).